We begin with the raw amino-acid sequence, 426 residues long: Serine--tRNA ligase (426 aa).

L-serine is bound at residue 230–232 (TAE). An ATP-binding site is contributed by 261–263 (RSE). Glu284 serves as a coordination point for L-serine. An ATP-binding site is contributed by 348-351 (EISS). Residue Ser384 participates in L-serine binding.

The protein belongs to the class-II aminoacyl-tRNA synthetase family. Type-1 seryl-tRNA synthetase subfamily. In terms of assembly, homodimer. The tRNA molecule binds across the dimer.

The protein resides in the cytoplasm. The enzyme catalyses tRNA(Ser) + L-serine + ATP = L-seryl-tRNA(Ser) + AMP + diphosphate + H(+). The catalysed reaction is tRNA(Sec) + L-serine + ATP = L-seryl-tRNA(Sec) + AMP + diphosphate + H(+). Its pathway is aminoacyl-tRNA biosynthesis; selenocysteinyl-tRNA(Sec) biosynthesis; L-seryl-tRNA(Sec) from L-serine and tRNA(Sec): step 1/1. Its function is as follows. Catalyzes the attachment of serine to tRNA(Ser). Is also able to aminoacylate tRNA(Sec) with serine, to form the misacylated tRNA L-seryl-tRNA(Sec), which will be further converted into selenocysteinyl-tRNA(Sec). The chain is Serine--tRNA ligase from Erythrobacter litoralis (strain HTCC2594).